The sequence spans 349 residues: Protein BCCIP homolog (349 aa).

Positions 1 to 10 are enriched in basic residues; it reads MGRVFKKKGG. A disordered region spans residues 1-65; that stretch reads MGRVFKKKGG…DDEEEDEDEQ (65 aa). Residues 11 to 33 show a composition bias toward basic and acidic residues; the sequence is AKREAEEEKQEELVMRKKLRKEE. Positions 34–65 are enriched in acidic residues; that stretch reads EPEPVEDVEEDEDVSDEDDEDIDDEEEDEDEQ.

Belongs to the BCP1 family.

This Caenorhabditis elegans protein is Protein BCCIP homolog.